The primary structure comprises 352 residues: DNA polymerase IV (352 aa).

The UmuC domain occupies 4 to 185; sequence IIHVDMDCFF…LPLSKIPGVG (182 aa). Mg(2+) contacts are provided by Asp8 and Asp103. The active site involves Glu104.

The protein belongs to the DNA polymerase type-Y family. In terms of assembly, monomer. It depends on Mg(2+) as a cofactor.

It localises to the cytoplasm. It carries out the reaction DNA(n) + a 2'-deoxyribonucleoside 5'-triphosphate = DNA(n+1) + diphosphate. Functionally, poorly processive, error-prone DNA polymerase involved in untargeted mutagenesis. Copies undamaged DNA at stalled replication forks, which arise in vivo from mismatched or misaligned primer ends. These misaligned primers can be extended by PolIV. Exhibits no 3'-5' exonuclease (proofreading) activity. May be involved in translesional synthesis, in conjunction with the beta clamp from PolIII. This chain is DNA polymerase IV, found in Yersinia pseudotuberculosis serotype O:1b (strain IP 31758).